A 472-amino-acid chain; its full sequence is E3 ubiquitin-protein ligase MYLIP-A (472 aa).

One can recognise an FERM domain in the interval 1-279 (MLCHVTRPDA…ETHAFYRCDT (279 aa)). The segment at 384 to 419 (CMLCCEEEIDAAFCPCGHMVCCQNCAAQLQSCPVCR) adopts an RING-type zinc-finger fold.

In terms of assembly, interacts with anxa5. As to expression, ubiquitous.

It localises to the cytoplasm. The protein localises to the cytosol. It catalyses the reaction S-ubiquitinyl-[E2 ubiquitin-conjugating enzyme]-L-cysteine + [acceptor protein]-L-lysine = [E2 ubiquitin-conjugating enzyme]-L-cysteine + N(6)-ubiquitinyl-[acceptor protein]-L-lysine.. It participates in protein modification; protein ubiquitination. Functionally, E3 ubiquitin-protein ligase that mediates ubiquitination and subsequent proteasomal degradation of myosin regulatory light chain (MRLC). Regulates cell movements during gastrulation by acting downstream of fz7 to antagonize the frizzled-signaling pathway. The chain is E3 ubiquitin-protein ligase MYLIP-A (mylipa) from Danio rerio (Zebrafish).